A 429-amino-acid polypeptide reads, in one-letter code: MKNNYNLRSIAAIAIGQVLDQGQSLSTVLPSLQKTISDKDRALLQELCFGTLRVLPQLEWCIQQLMAKPMTGKQRTLHYLLMVGLYQLLYTRIPAHAVLAETVEGAVALKRPQLKGLINGVLRQFQRQQEELLQRAANNDSRYLHPSWLLKRIQQAYPAQWEQIIDANNQKPPMWLRVNRLHHTREDYLQLMEQAGIAAEPHAEYRDAVRLLAPCAVTDLPGFADGWVTVQDASAQGCVDLLDPQDGEQILDLCAAPGGKTTHILEAAPKAHVMAVDIDEQRLKRVKENLQRLRLHAEVKQGDGRTPQQWCGDKQFDRILLDAPCSATGVIRRHPDIKWLRRDSDIAELAALQAEIIEAIWPHLKSGGVMVYATCSILPAENAEQVSAFLQRHADARLVETGNQQQPGRQNLPHPEDGDGFFYAKLIKM.

S-adenosyl-L-methionine is bound by residues 254-260 (CAAPGGK), Asp-277, Asp-303, and Asp-322. Cys-375 serves as the catalytic Nucleophile.

Belongs to the class I-like SAM-binding methyltransferase superfamily. RsmB/NOP family.

The protein resides in the cytoplasm. The enzyme catalyses cytidine(967) in 16S rRNA + S-adenosyl-L-methionine = 5-methylcytidine(967) in 16S rRNA + S-adenosyl-L-homocysteine + H(+). Functionally, specifically methylates the cytosine at position 967 (m5C967) of 16S rRNA. In Serratia proteamaculans (strain 568), this protein is Ribosomal RNA small subunit methyltransferase B.